Here is a 347-residue protein sequence, read N- to C-terminus: NADH-ubiquinone oxidoreductase chain 2 (347 aa).

The next 11 helical transmembrane spans lie at 2 to 22, 25 to 45, 56 to 76, 96 to 116, 122 to 142, 149 to 169, 178 to 197, 202 to 219, 241 to 261, 278 to 298, and 323 to 343; these read SPYVLTIMSLSLLLGTTMTLI, HWLTAWMGLEINTLAVIPLMT, AIKYFMIQATASMIILFSAIF, FMMTIALAMKLGLAPFHFWVP, IPLLSGMILLTWQKIAPISIF, LNMSLLMILSITSTLLGGWGG, ILAYSSIAHMGWMTIIIMIY, ILNLILYLASTITMFMVL, MIIITLTLLSLGGLPPLTGFM, LAMMLALSTLLNLFFYMRIIY, and ILPIPTLTIISSLLLPMTPMF.

It belongs to the complex I subunit 2 family. As to quaternary structure, core subunit of respiratory chain NADH dehydrogenase (Complex I) which is composed of 45 different subunits. Interacts with TMEM242.

The protein localises to the mitochondrion inner membrane. The enzyme catalyses a ubiquinone + NADH + 5 H(+)(in) = a ubiquinol + NAD(+) + 4 H(+)(out). Functionally, core subunit of the mitochondrial membrane respiratory chain NADH dehydrogenase (Complex I) which catalyzes electron transfer from NADH through the respiratory chain, using ubiquinone as an electron acceptor. Essential for the catalytic activity and assembly of complex I. This Metachirus nudicaudatus (Brown four-eyed opossum) protein is NADH-ubiquinone oxidoreductase chain 2.